A 672-amino-acid polypeptide reads, in one-letter code: Putative per-hexamer repeat protein 5 (672 aa).

Gly residues-rich tracts occupy residues 141–161 (TGTGTGTGTGTGTGTGTGTGT), 171–191 (TDRGTGTGTGTGTGTGTGTGT), 215–233 (TGTGTGTGTGTGTGTGTDT), 243–263 (TGTGTGTGTGTGTGTGTGTGT), 273–295 (TDRGTGTGTGTGTGTGTGTGTGT), 303–355 (TGTG…GSGS), and 365–389 (TGTGTGTDTGTGTGTGTGTGTGSGS). 2 disordered regions span residues 141-193 (TGTG…GTGT) and 213-672 (TGTG…TGTA). Over residues 390-424 (GTAKVTGTATTTATVTETGTAKVTGTDTGTAKVTG) the composition is skewed to low complexity. A compositionally biased stretch (gly residues) spans 425 to 469 (TGTGTGTGTGTGTGTGTGTGTGTGTGTGTGTGTGTGTGTGTGSGS). A compositionally biased stretch (low complexity) spans 470–486 (GTAKVTGTDTGTAKVTG). The span at 487 to 537 (TGTGTGTGTGTGTGTGTGTGTGTGSGSGSGSGSGSGSGTGTGTGLGSGSGS) shows a compositional bias: gly residues. Positions 538 to 552 (GTAKVTGTGTAKVTG) are enriched in low complexity. Residues 553 to 617 (TGTGTGTGTG…GTGTGTGTGT (65 aa)) show a composition bias toward gly residues. Residues 618–636 (GTSTVTVRGTGTGTATATG) show a composition bias toward low complexity. Composition is skewed to gly residues over residues 637-653 (TGTGTGTGTGTGTGTGT) and 663-672 (RGTGTGTGTA).

The sequence is that of Putative per-hexamer repeat protein 5 (Phxr5) from Mus musculus (Mouse).